The sequence spans 323 residues: 8-oxo-dGDP phosphatase NUDT18 (323 aa).

In terms of domain architecture, Nudix hydrolase spans 37–167 (RLRKNVCYVV…DVLHLVELGA (131 aa)). Residue leucine 58 participates in Mg(2+) binding. The short motif at 76–97 (GRMEPGETIVEAMQREVKEEAG) is the Nudix box element.

It belongs to the Nudix hydrolase family. Mn(2+) is required as a cofactor. It depends on Mg(2+) as a cofactor.

It carries out the reaction 8-oxo-dGDP + H2O = 8-oxo-dGMP + phosphate + H(+). The enzyme catalyses 8-oxo-dADP + H2O = 8-oxo-dAMP + phosphate + H(+). The catalysed reaction is 2-oxo-dADP + H2O = 2-oxo-dAMP + phosphate + H(+). It catalyses the reaction 8-oxo-GDP + H2O = 8-oxo-GMP + phosphate + H(+). Functionally, mediates the hydrolysis of oxidized nucleoside diphosphate derivatives. Hydrolyzes 8-oxo-7,8-dihydroguanine (8-oxo-Gua)-containing deoxyribo- and ribonucleoside diphosphates to the monophosphates. Hydrolyzes 8-oxo-dGDP and 8-oxo-GDP with the same efficiencies. Also hydrolyzes 8-OH-dADP and 2-OH-dADP. Exhibited no or minimal hydrolysis activity against 8-oxo-dGTP, 8-oxo-GTP, dGTP, GTP, dGDP and GDP. Probably removes oxidized guanine nucleotides from both the DNA and RNA precursor pools. This Mus musculus (Mouse) protein is 8-oxo-dGDP phosphatase NUDT18.